The following is a 142-amino-acid chain: Putative transcriptional regulatory protein Mevan_1098 (142 aa).

It belongs to the Tfx family.

Its function is as follows. Putative transcriptional regulator. The polypeptide is Putative transcriptional regulatory protein Mevan_1098 (Methanococcus vannielii (strain ATCC 35089 / DSM 1224 / JCM 13029 / OCM 148 / SB)).